The chain runs to 1377 residues: DNA-directed RNA polymerase subunit beta' (1377 aa).

Zn(2+) contacts are provided by Cys60, Cys62, Cys75, and Cys78. 3 residues coordinate Mg(2+): Asp449, Asp451, and Asp453. Zn(2+)-binding residues include Cys777, Cys851, Cys858, and Cys861.

Belongs to the RNA polymerase beta' chain family. The RNAP catalytic core consists of 2 alpha, 1 beta, 1 beta' and 1 omega subunit. When a sigma factor is associated with the core the holoenzyme is formed, which can initiate transcription. Requires Mg(2+) as cofactor. Zn(2+) is required as a cofactor.

It catalyses the reaction RNA(n) + a ribonucleoside 5'-triphosphate = RNA(n+1) + diphosphate. Its function is as follows. DNA-dependent RNA polymerase catalyzes the transcription of DNA into RNA using the four ribonucleoside triphosphates as substrates. The chain is DNA-directed RNA polymerase subunit beta' from Borreliella afzelii (strain PKo) (Borrelia afzelii).